Consider the following 334-residue polypeptide: N-acetyl-gamma-glutamyl-phosphate reductase (334 aa).

Cys154 is an active-site residue.

This sequence belongs to the NAGSA dehydrogenase family. Type 1 subfamily.

The protein localises to the cytoplasm. The enzyme catalyses N-acetyl-L-glutamate 5-semialdehyde + phosphate + NADP(+) = N-acetyl-L-glutamyl 5-phosphate + NADPH + H(+). It participates in amino-acid biosynthesis; L-arginine biosynthesis; N(2)-acetyl-L-ornithine from L-glutamate: step 3/4. In terms of biological role, catalyzes the NADPH-dependent reduction of N-acetyl-5-glutamyl phosphate to yield N-acetyl-L-glutamate 5-semialdehyde. This is N-acetyl-gamma-glutamyl-phosphate reductase from Buchnera aphidicola subsp. Acyrthosiphon pisum (strain Tuc7).